Here is a 174-residue protein sequence, read N- to C-terminus: Shikimate kinase (174 aa).

14–19 is an ATP binding site; the sequence is GAGKST. Serine 18 lines the Mg(2+) pocket. Residues aspartate 36, arginine 60, and glycine 82 each contribute to the substrate site. An ATP-binding site is contributed by arginine 120. Substrate is bound at residue arginine 139. Residue glutamine 156 participates in ATP binding.

This sequence belongs to the shikimate kinase family. Monomer. Mg(2+) serves as cofactor.

It is found in the cytoplasm. The enzyme catalyses shikimate + ATP = 3-phosphoshikimate + ADP + H(+). It functions in the pathway metabolic intermediate biosynthesis; chorismate biosynthesis; chorismate from D-erythrose 4-phosphate and phosphoenolpyruvate: step 5/7. Catalyzes the specific phosphorylation of the 3-hydroxyl group of shikimic acid using ATP as a cosubstrate. This chain is Shikimate kinase, found in Vibrio cholerae serotype O1 (strain ATCC 39541 / Classical Ogawa 395 / O395).